We begin with the raw amino-acid sequence, 147 residues long: MSRLEVTEKIVATKVAKGLKWSDIAAKVGLSKEWTTAACLGQMTLTKEQAGIVGEIFSLSDAEQKWLMVVPYKGSLPTTVPTDPLIYRFYELVSVYGTTFKELIHEEFGDGIMSAIDFKMDLQREPHPAGDRVSITMSGKFLPYKTY.

Active-site residues include R88, E91, and S114.

This sequence belongs to the cyanase family.

The catalysed reaction is cyanate + hydrogencarbonate + 3 H(+) = NH4(+) + 2 CO2. In terms of biological role, catalyzes the reaction of cyanate with bicarbonate to produce ammonia and carbon dioxide. The sequence is that of Cyanate hydratase from Methylibium petroleiphilum (strain ATCC BAA-1232 / LMG 22953 / PM1).